The chain runs to 257 residues: Phosphonates import ATP-binding protein PhnC (257 aa).

Residues 4–248 (IEFKNVSKVY…VFSEIYGRTI (245 aa)) enclose the ABC transporter domain. An ATP-binding site is contributed by 37-44 (GLSGAGKS).

The protein belongs to the ABC transporter superfamily. Phosphonates importer (TC 3.A.1.9.1) family. In terms of assembly, the complex is composed of two ATP-binding proteins (PhnC), two transmembrane proteins (PhnE) and a solute-binding protein (PhnD).

It localises to the cell membrane. It carries out the reaction phosphonate(out) + ATP + H2O = phosphonate(in) + ADP + phosphate + H(+). Part of the ABC transporter complex PhnCDE involved in phosphonates import. Responsible for energy coupling to the transport system. This chain is Phosphonates import ATP-binding protein PhnC, found in Staphylococcus aureus (strain COL).